The following is a 299-amino-acid chain: Acetaldehyde dehydrogenase (299 aa).

The active-site Acyl-thioester intermediate is cysteine 126. NAD(+) is bound by residues 157-165 (SAGPGTRQN) and asparagine 267.

Belongs to the acetaldehyde dehydrogenase family.

It carries out the reaction acetaldehyde + NAD(+) + CoA = acetyl-CoA + NADH + H(+). In Carboxydothermus hydrogenoformans (strain ATCC BAA-161 / DSM 6008 / Z-2901), this protein is Acetaldehyde dehydrogenase (mhpF).